We begin with the raw amino-acid sequence, 669 residues long: DNA mismatch repair protein MutL (669 aa).

2 disordered regions span residues Asn-354–Tyr-402 and Thr-448–Ser-479. A compositionally biased stretch (polar residues) spans Thr-448–Lys-468.

It belongs to the DNA mismatch repair MutL/HexB family.

This protein is involved in the repair of mismatches in DNA. It is required for dam-dependent methyl-directed DNA mismatch repair. May act as a 'molecular matchmaker', a protein that promotes the formation of a stable complex between two or more DNA-binding proteins in an ATP-dependent manner without itself being part of a final effector complex. The sequence is that of DNA mismatch repair protein MutL from Pectobacterium carotovorum subsp. carotovorum (strain PC1).